We begin with the raw amino-acid sequence, 49 residues long: Small ribosomal subunit protein uS14B (49 aa).

It belongs to the universal ribosomal protein uS14 family. Zinc-binding uS14 subfamily. Part of the 30S ribosomal subunit.

Its function is as follows. Binds 16S rRNA, required for the assembly of 30S particles. This Natronomonas pharaonis (strain ATCC 35678 / DSM 2160 / CIP 103997 / JCM 8858 / NBRC 14720 / NCIMB 2260 / Gabara) (Halobacterium pharaonis) protein is Small ribosomal subunit protein uS14B.